Here is a 150-residue protein sequence, read N- to C-terminus: uncharacterized protein (150 aa).

Positions 19–93 constitute a Rhodanese domain; the sequence is GAQDYVLVDV…SSKRLALRES (75 aa).

This is an uncharacterized protein from Synechococcus elongatus.